A 231-amino-acid chain; its full sequence is Large ribosomal subunit protein uL1 (231 aa).

It belongs to the universal ribosomal protein uL1 family. In terms of assembly, part of the 50S ribosomal subunit.

In terms of biological role, binds directly to 23S rRNA. The L1 stalk is quite mobile in the ribosome, and is involved in E site tRNA release. Protein L1 is also a translational repressor protein, it controls the translation of the L11 operon by binding to its mRNA. The chain is Large ribosomal subunit protein uL1 from Halalkalibacterium halodurans (strain ATCC BAA-125 / DSM 18197 / FERM 7344 / JCM 9153 / C-125) (Bacillus halodurans).